The following is a 337-amino-acid chain: Heme A synthase (337 aa).

The next 5 helical transmembrane spans lie at 6-26 (ITKW…IGGI), 87-107 (FIHR…LIYF), 119-139 (LPYI…WYMV), 154-174 (LAFH…QLIK), and 192-212 (LIFS…GALV). Heme is bound at residue His-256. 3 consecutive transmembrane segments (helical) span residues 258 to 278 (LGSY…LTIE), 285 to 305 (IAYF…ITLL), and 308 to 328 (VPII…SIII). His-316 contacts heme.

This sequence belongs to the COX15/CtaA family. Type 2 subfamily. As to quaternary structure, interacts with CtaB. Heme b is required as a cofactor.

Its subcellular location is the cell membrane. The catalysed reaction is Fe(II)-heme o + 2 A + H2O = Fe(II)-heme a + 2 AH2. Its pathway is porphyrin-containing compound metabolism; heme A biosynthesis; heme A from heme O: step 1/1. Its function is as follows. Catalyzes the conversion of heme O to heme A by two successive hydroxylations of the methyl group at C8. The first hydroxylation forms heme I, the second hydroxylation results in an unstable dihydroxymethyl group, which spontaneously dehydrates, resulting in the formyl group of heme A. This Rickettsia akari (strain Hartford) protein is Heme A synthase.